The sequence spans 128 residues: Small ribosomal subunit protein uS11 (128 aa).

The protein belongs to the universal ribosomal protein uS11 family. As to quaternary structure, part of the 30S ribosomal subunit. Interacts with proteins S7 and S18. Binds to IF-3.

Its function is as follows. Located on the platform of the 30S subunit, it bridges several disparate RNA helices of the 16S rRNA. Forms part of the Shine-Dalgarno cleft in the 70S ribosome. This chain is Small ribosomal subunit protein uS11, found in Aster yellows witches'-broom phytoplasma (strain AYWB).